We begin with the raw amino-acid sequence, 63 residues long: Large ribosomal subunit protein uL29 (63 aa).

Belongs to the universal ribosomal protein uL29 family.

In Aeromonas salmonicida (strain A449), this protein is Large ribosomal subunit protein uL29.